The sequence spans 145 residues: Transcription antitermination protein NusB (145 aa).

This sequence belongs to the NusB family.

Its function is as follows. Involved in transcription antitermination. Required for transcription of ribosomal RNA (rRNA) genes. Binds specifically to the boxA antiterminator sequence of the ribosomal RNA (rrn) operons. This Thiobacillus denitrificans (strain ATCC 25259 / T1) protein is Transcription antitermination protein NusB.